Here is a 368-residue protein sequence, read N- to C-terminus: RAB6-interacting golgin (368 aa).

Disordered regions lie at residues 1–43 (MAQD…REKA), 55–133 (DGSA…DCKV), and 302–368 (KQMA…AVAT). Residues 11–27 (EELRRLKQNKDPFEPQR) are compositionally biased toward basic and acidic residues. The span at 80–89 (SPSPVAPSPL) shows a compositional bias: pro residues. A compositionally biased stretch (basic and acidic residues) spans 114 to 133 (NSHHGHKSAEVRAPKPDCKV). The stretch at 145–310 (RWEVLQQEQR…AKQMASVERL (166 aa)) forms a coiled coil. Positions 188-368 (IQKELQALDD…AKNFSAAVAT (181 aa)) are necessary for interaction with RCHY1.

The protein belongs to the GORAB family. Interacts with RCHY1. Interacts with SCYL1 and RAB6A/RAB6. In terms of tissue distribution, expressed in small intestine, kidney, skeletal muscle, lung, spleen, brain and heart. High expression is observed in osteoblasts and skin; also expressed in osteoclasts albeit at lower levels.

The protein localises to the cytoplasm. It is found in the golgi apparatus. This chain is RAB6-interacting golgin (Gorab), found in Mus musculus (Mouse).